We begin with the raw amino-acid sequence, 60 residues long: Cytotoxin 7 (60 aa).

4 disulfides stabilise this stretch: Cys-3–Cys-21, Cys-14–Cys-38, Cys-42–Cys-53, and Cys-54–Cys-59.

It belongs to the three-finger toxin family. Short-chain subfamily. Type IA cytotoxin sub-subfamily. Monomer in solution; Homodimer and oligomer in the presence of negatively charged lipids forming a pore with a size ranging between 20 and 30 Angstroms. As to expression, expressed by the venom gland.

The protein resides in the secreted. Its subcellular location is the target cell membrane. Functionally, shows cytolytic activity on many different cells by forming pore in lipid membranes. In vivo, increases heart rate or kills the animal by cardiac arrest. In addition, it binds to heparin with high affinity, interacts with Kv channel-interacting protein 1 (KCNIP1) in a calcium-independent manner, and binds to integrin alpha-V/beta-3 (ITGAV/ITGB3) with moderate affinity. Preferentially binds acidic phospholipids like phosphatidylserine, phosphatidic acid and phosphatidyl glycerol. Has hemolytic activity towards human erythrocytes (EC(50)=0.171 uM) and cytolytic activity towards various cell lines. The chain is Cytotoxin 7 from Naja naja (Indian cobra).